We begin with the raw amino-acid sequence, 510 residues long: Metalloprotease TIKI homolog (510 aa).

Positions 1–30 are cleaved as a signal peptide; that stretch reads MQVKIVQVFPCLVLLVKLVLLSVLLPSATG. Over 31–489 the chain is Extracellular; sequence SYHCSNNATQ…FIPSASSGLR (459 aa). N-linked (GlcNAc...) asparagine glycosylation is found at asparagine 37, asparagine 98, asparagine 108, asparagine 141, asparagine 223, asparagine 281, asparagine 322, asparagine 383, and asparagine 417. Positions 435-471 are enriched in low complexity; that stretch reads TSLNSATASTTVATPTSSVTPPTSSSSQTRSLTISDS. Residues 435–477 form a disordered region; it reads TSLNSATASTTVATPTSSVTPPTSSSSQTRSLTISDSQRTSDD. Residues 490–510 form a helical membrane-spanning segment; that stretch reads YNIGLVCVTLFFVLLIITSAL.

The protein belongs to the TIKI family. It depends on Mn(2+) as a cofactor. Co(2+) is required as a cofactor.

It localises to the membrane. Its function is as follows. Metalloprotease. The chain is Metalloprotease TIKI homolog from Amphimedon queenslandica (Sponge).